The chain runs to 101 residues: Small ribosomal subunit protein uS14 (101 aa).

It belongs to the universal ribosomal protein uS14 family. Part of the 30S ribosomal subunit. Contacts proteins S3 and S10.

Its function is as follows. Binds 16S rRNA, required for the assembly of 30S particles and may also be responsible for determining the conformation of the 16S rRNA at the A site. In Roseobacter denitrificans (strain ATCC 33942 / OCh 114) (Erythrobacter sp. (strain OCh 114)), this protein is Small ribosomal subunit protein uS14.